A 418-amino-acid chain; its full sequence is uncharacterized protein (418 aa).

This is an uncharacterized protein from Invertebrate iridescent virus 6 (IIV-6).